The following is a 306-amino-acid chain: OVARIAN TUMOR DOMAIN-containing deubiquitinating enzyme 1 (306 aa).

The OTU domain maps to isoleucine 81–lysine 295. Aspartate 89 is a catalytic residue. Cysteine 92 acts as the Nucleophile in catalysis. Catalysis depends on residues histidine 259 and histidine 288.

This sequence belongs to the peptidase C65 family.

The enzyme catalyses Thiol-dependent hydrolysis of ester, thioester, amide, peptide and isopeptide bonds formed by the C-terminal Gly of ubiquitin (a 76-residue protein attached to proteins as an intracellular targeting signal).. Its activity is regulated as follows. Cleavage activities for 'Lys-48'- and 'Lys-63'-linked ubiquitin (UB) tetramers is inhibited by UB aldehyde and N-ethylmaleimide but not by the metalloprotease inhibitors 1,10-phenanthroline and EDTA, and the serine protease inhibitor phenylmethylsulfonyl fluoride. Its function is as follows. Hydrolase that can remove conjugated ubiquitin from proteins in vitro and may therefore play an important regulatory role at the level of protein turnover by preventing degradation. Cysteine protease with a preference for Met-1 and 'Lys-48' over 'Lys-63'-linked ubiquitin (UB) tetramers (e.g. Ub2, Ub3 and Ub4) as substrates. This Arabidopsis thaliana (Mouse-ear cress) protein is OVARIAN TUMOR DOMAIN-containing deubiquitinating enzyme 1.